The sequence spans 1363 residues: DNA-directed RNA polymerase subunit beta (1363 aa).

The protein belongs to the RNA polymerase beta chain family. As to quaternary structure, the RNAP catalytic core consists of 2 alpha, 1 beta, 1 beta' and 1 omega subunit. When a sigma factor is associated with the core the holoenzyme is formed, which can initiate transcription.

The catalysed reaction is RNA(n) + a ribonucleoside 5'-triphosphate = RNA(n+1) + diphosphate. Its function is as follows. DNA-dependent RNA polymerase catalyzes the transcription of DNA into RNA using the four ribonucleoside triphosphates as substrates. The polypeptide is DNA-directed RNA polymerase subunit beta (Neorickettsia risticii (Ehrlichia risticii)).